A 611-amino-acid polypeptide reads, in one-letter code: Threonine--tRNA ligase (611 aa).

The segment at 1-145 (MRLLLIHSDH…TILPGEGAAA (145 aa)) is editing domain. The interval 195–487 (VHVDLMRAKE…TAAQEVPSFP (293 aa)) is catalytic. C287, H339, and H460 together coordinate Zn(2+).

The protein belongs to the class-II aminoacyl-tRNA synthetase family. In terms of assembly, homodimer. Zn(2+) serves as cofactor.

The protein localises to the cytoplasm. It catalyses the reaction tRNA(Thr) + L-threonine + ATP = L-threonyl-tRNA(Thr) + AMP + diphosphate + H(+). In terms of biological role, catalyzes the attachment of threonine to tRNA(Thr) in a two-step reaction: L-threonine is first activated by ATP to form Thr-AMP and then transferred to the acceptor end of tRNA(Thr). Also edits incorrectly charged L-seryl-tRNA(Thr). The polypeptide is Threonine--tRNA ligase (Methanoculleus marisnigri (strain ATCC 35101 / DSM 1498 / JR1)).